Reading from the N-terminus, the 202-residue chain is Segregation and condensation protein B (202 aa).

This sequence belongs to the ScpB family. As to quaternary structure, homodimer. Homodimerization may be required to stabilize the binding of ScpA to the Smc head domains. Component of a cohesin-like complex composed of ScpA, ScpB and the Smc homodimer, in which ScpA and ScpB bind to the head domain of Smc. The presence of the three proteins is required for the association of the complex with DNA.

The protein resides in the cytoplasm. Functionally, participates in chromosomal partition during cell division. May act via the formation of a condensin-like complex containing Smc and ScpA that pull DNA away from mid-cell into both cell halves. This chain is Segregation and condensation protein B, found in Clostridium acetobutylicum (strain ATCC 824 / DSM 792 / JCM 1419 / IAM 19013 / LMG 5710 / NBRC 13948 / NRRL B-527 / VKM B-1787 / 2291 / W).